The following is an 895-amino-acid chain: Protein translocase subunit SecA (895 aa).

Residues glutamine 86, 104–108 (GEGKT), and aspartate 494 contribute to the ATP site. 2 stretches are compositionally biased toward low complexity: residues 838 to 849 (AAATPPGFGAPP) and 870 to 882 (GDAA…TGNR). A disordered region spans residues 838-895 (AAATPPGFGAPPVRQQLQYSAPTAEGDVEVHAGDAAATDADTGNRAQRRANQRQQREV).

Belongs to the SecA family. Monomer and homodimer. Part of the essential Sec protein translocation apparatus which comprises SecA, SecYEG and auxiliary proteins SecDF. Other proteins may also be involved.

The protein resides in the cell membrane. The protein localises to the cytoplasm. It catalyses the reaction ATP + H2O + cellular proteinSide 1 = ADP + phosphate + cellular proteinSide 2.. In terms of biological role, part of the Sec protein translocase complex. Interacts with the SecYEG preprotein conducting channel. Has a central role in coupling the hydrolysis of ATP to the transfer of proteins into and across the cell membrane, serving as an ATP-driven molecular motor driving the stepwise translocation of polypeptide chains across the membrane. This Kineococcus radiotolerans (strain ATCC BAA-149 / DSM 14245 / SRS30216) protein is Protein translocase subunit SecA.